Here is a 274-residue protein sequence, read N- to C-terminus: 2,3,4,5-tetrahydropyridine-2,6-dicarboxylate N-succinyltransferase (274 aa).

Substrate is bound by residues arginine 104 and aspartate 141.

It belongs to the transferase hexapeptide repeat family. As to quaternary structure, homotrimer.

It is found in the cytoplasm. It catalyses the reaction (S)-2,3,4,5-tetrahydrodipicolinate + succinyl-CoA + H2O = (S)-2-succinylamino-6-oxoheptanedioate + CoA. It functions in the pathway amino-acid biosynthesis; L-lysine biosynthesis via DAP pathway; LL-2,6-diaminopimelate from (S)-tetrahydrodipicolinate (succinylase route): step 1/3. The protein is 2,3,4,5-tetrahydropyridine-2,6-dicarboxylate N-succinyltransferase of Edwardsiella ictaluri (strain 93-146).